A 458-amino-acid polypeptide reads, in one-letter code: RuvB-like helicase 1 (458 aa).

71-78 contributes to the ATP binding site; sequence GGPGTGKT.

The protein belongs to the RuvB family. As to quaternary structure, may form heterododecamers with hel-2/rvb2. Component of the SWR1 chromatin remodeling complex, the INO80 chromatin remodeling complex, and of the R2TP complex.

The protein resides in the nucleus. It catalyses the reaction ATP + H2O = ADP + phosphate + H(+). DNA helicase which participates in several chromatin remodeling complexes, including the SWR1 and the INO80 complexes. The SWR1 complex mediates the ATP-dependent exchange of histone H2A for the H2A variant H2A.Z leading to transcriptional regulation of selected genes by chromatin remodeling. The INO80 complex remodels chromatin by shifting nucleosomes and is involved in DNA repair. Also involved in pre-rRNA processing. In Neurospora crassa (strain ATCC 24698 / 74-OR23-1A / CBS 708.71 / DSM 1257 / FGSC 987), this protein is RuvB-like helicase 1 (hel-1).